Here is a 443-residue protein sequence, read N- to C-terminus: Serine/threonine-protein phosphatase 2A 55 kDa regulatory subunit B beta isoform (443 aa).

WD repeat units lie at residues 22–61 (TEAD…KNQV), 87–128 (EIEE…KRPE), 171–209 (AHTY…QSFN), and 220–260 (ELTE…LCDR). A Phosphoserine modification is found at Ser275. WD repeat units lie at residues 279-317 (EIIS…RPIE), 334-375 (ENDC…DVTL), and 410-442 (DFSK…QDKV). Tyr295 is subject to Phosphotyrosine. Thr298 bears the Phosphothreonine mark.

This sequence belongs to the phosphatase 2A regulatory subunit B family. In terms of assembly, PP2A consists of a common heterodimeric core enzyme, composed of a 36 kDa catalytic subunit (subunit C) and a 65 kDa constant regulatory subunit (PR65 or subunit A), that associates with a variety of regulatory subunits. Proteins that associate with the core dimer include three families of regulatory subunits B (the R2/B/PR55/B55, R3/B''/PR72/PR130/PR59 and R5/B'/B56 families), the 48 kDa variable regulatory subunit, viral proteins, and cell signaling molecules. Interacts with TOMM22. Interacts with IER5 (via N- and C-terminal regions).

It localises to the cytoplasm. The protein localises to the cytoskeleton. The protein resides in the membrane. The B regulatory subunit might modulate substrate selectivity and catalytic activity, and might also direct the localization of the catalytic enzyme to a particular subcellular compartment. The polypeptide is Serine/threonine-protein phosphatase 2A 55 kDa regulatory subunit B beta isoform (PPP2R2B) (Bos taurus (Bovine)).